Consider the following 196-residue polypeptide: dTTP/UTP pyrophosphatase (196 aa).

The active-site Proton acceptor is Asp78.

This sequence belongs to the Maf family. YhdE subfamily. A divalent metal cation serves as cofactor.

The protein resides in the cytoplasm. It catalyses the reaction dTTP + H2O = dTMP + diphosphate + H(+). The enzyme catalyses UTP + H2O = UMP + diphosphate + H(+). Functionally, nucleoside triphosphate pyrophosphatase that hydrolyzes dTTP and UTP. May have a dual role in cell division arrest and in preventing the incorporation of modified nucleotides into cellular nucleic acids. This Photobacterium profundum (strain SS9) protein is dTTP/UTP pyrophosphatase.